The primary structure comprises 122 residues: Large ribosomal subunit protein uL14c (122 aa).

This sequence belongs to the universal ribosomal protein uL14 family. Part of the 50S ribosomal subunit.

Its subcellular location is the plastid. The protein localises to the chloroplast. Binds to 23S rRNA. The sequence is that of Large ribosomal subunit protein uL14c from Chara vulgaris (Common stonewort).